Reading from the N-terminus, the 236-residue chain is Glyoxalase 3 (236 aa).

Active-site residues include Cys-136, His-137, and Glu-168. Cys-136 carries the post-translational modification Cysteine sulfinic acid (-SO2H).

Belongs to the peptidase C56 family. HSP31-like subfamily. Monomer.

It carries out the reaction methylglyoxal + H2O = (R)-lactate + H(+). In terms of biological role, catalyzes the conversion of methylglyoxal (MG) to D-lactate in a single glutathione (GSH)-independent step. Selective for MG, does not use glyoxal as substrate. Plays a role in detoxifying endogenously produced MG, particularly when glycerol is the principal carbon source. Important for viability in stationary phase. The chain is Glyoxalase 3 from Candida albicans (strain SC5314 / ATCC MYA-2876) (Yeast).